Reading from the N-terminus, the 301-residue chain is Protoheme IX farnesyltransferase (301 aa).

The next 9 membrane-spanning stretches (helical) occupy residues 20 to 42 (FTEL…GMWL), 55 to 75 (VDVI…SGAF), 105 to 125 (ALMV…MTTW), 126 to 146 (QAGV…SLYA), 150 to 172 (LVSN…WFAV), 176 to 198 (FSMV…FYAI), 227 to 247 (MFFW…LGIV), 249 to 269 (VILA…GFKM), and 280 to 300 (FIYS…ISIF).

It belongs to the UbiA prenyltransferase family. Protoheme IX farnesyltransferase subfamily. As to quaternary structure, interacts with CtaA.

The protein resides in the cell membrane. The catalysed reaction is heme b + (2E,6E)-farnesyl diphosphate + H2O = Fe(II)-heme o + diphosphate. The protein operates within porphyrin-containing compound metabolism; heme O biosynthesis; heme O from protoheme: step 1/1. Functionally, converts heme B (protoheme IX) to heme O by substitution of the vinyl group on carbon 2 of heme B porphyrin ring with a hydroxyethyl farnesyl side group. The sequence is that of Protoheme IX farnesyltransferase from Listeria welshimeri serovar 6b (strain ATCC 35897 / DSM 20650 / CCUG 15529 / CIP 8149 / NCTC 11857 / SLCC 5334 / V8).